The chain runs to 546 residues: Probable protein kinase UbiB (546 aa).

The Protein kinase domain occupies 124 to 502 (DFDIKPLASA…HVRQGQSRYL (379 aa)). ATP contacts are provided by residues 130-138 (LASASIAQV) and Lys153. Asp288 acts as the Proton acceptor in catalysis. 2 consecutive transmembrane segments (helical) span residues 501–521 (YLLG…VSRP) and 522–542 (EWGL…FVGW).

This sequence belongs to the ABC1 family. UbiB subfamily.

The protein localises to the cell inner membrane. It functions in the pathway cofactor biosynthesis; ubiquinone biosynthesis [regulation]. Its function is as follows. Is probably a protein kinase regulator of UbiI activity which is involved in aerobic coenzyme Q (ubiquinone) biosynthesis. The sequence is that of Probable protein kinase UbiB from Escherichia fergusonii (strain ATCC 35469 / DSM 13698 / CCUG 18766 / IAM 14443 / JCM 21226 / LMG 7866 / NBRC 102419 / NCTC 12128 / CDC 0568-73).